Here is a 312-residue protein sequence, read N- to C-terminus: DDRGK domain-containing protein 1 (312 aa).

Over 1 to 2 (ME) the chain is Lumenal. The chain crosses the membrane as a helical span at residues 3-23 (LIILVGIATALLVVIITLYLL). Residues 24 to 312 (QKKNAAPETK…ISAGGEEASS (289 aa)) lie on the Cytoplasmic side of the membrane. Positions 59–79 (NQRNRLRQNAPAAPAGQVAPA) are enriched in low complexity. A disordered region spans residues 59-162 (NQRNRLRQNA…RKHQEDLEAE (104 aa)). Basic and acidic residues predominate over residues 110-162 (LDEKMGAKKRAKMEAKEQKRLQREQELHDREQRKVKEAKEEAERKHQEDLEAE).

Belongs to the DDRGK1 family. In terms of assembly, interacts with Atg9; the interaction is transient.

It is found in the endoplasmic reticulum membrane. Substrate adapter for ufmylation, the covalent attachment of the ubiquitin-like modifier UFM1 to substrate proteins. Required for ufmylation of Atg9; protects the nervous system during aging, possibly by stabilizing Atg9 and supporting its function. The protein is DDRGK domain-containing protein 1 of Drosophila yakuba (Fruit fly).